A 441-amino-acid polypeptide reads, in one-letter code: UBX domain-containing protein 6 (441 aa).

A mediates interaction with LMAN1 region spans residues 1–10 (MKKFFQEIKA). Disordered stretches follow at residues 12–57 (IKFK…MAAA), 62–81 (RLEQ…SIRN), and 86–113 (ELRA…EEGS). Positions 27–36 (VGEKAPKEKP) are enriched in basic and acidic residues. The VCP/p97-interacting motif (VIM) stretch occupies residues 51–63 (EAQMAAAAALARL). The 70-residue stretch at 175-244 (VDTIAKYLDN…GPEEFYVLSE (70 aa)) folds into the PUB domain. A UBX domain is found at 332–408 (RKYTYTLLRV…GLVPSALLTF (77 aa)).

Interacts with VCP through the PUB domain (via C-terminus) and VIM motif (via N-terminus); the interaction is direct. Forms a ternary complex with CAV1 and VCP. Interacts with SYVN1. Interacts with HERPUD1. Interacts with VCPKMT. May interact with DERL1. Interacts with PLAA, VCP and YOD1; may form a complex involved in macroautophagy. Interacts with LMAN1.

It is found in the cytoplasm. Its subcellular location is the cytosol. The protein resides in the membrane. It localises to the nucleus. The protein localises to the cytoskeleton. It is found in the microtubule organizing center. Its subcellular location is the centrosome. The protein resides in the early endosome membrane. It localises to the late endosome membrane. The protein localises to the lysosome membrane. May negatively regulate the ATPase activity of VCP, an ATP-driven segregase that associates with different cofactors to control a wide variety of cellular processes. As a cofactor of VCP, it may play a role in the transport of CAV1 to lysosomes for degradation. It may also play a role in endoplasmic reticulum-associated degradation (ERAD) of misfolded proteins. Together with VCP and other cofactors, it may play a role in macroautophagy, regulating for instance the clearance of damaged lysosomes. This Bos taurus (Bovine) protein is UBX domain-containing protein 6.